The chain runs to 562 residues: Urease subunit alpha (562 aa).

Residues 131 to 562 (GGMDCHIHFI…LPMAQRYFLF (432 aa)) enclose the Urease domain. Ni(2+) is bound by residues His136, His138, and Lys219. Residue Lys219 is modified to N6-carboxylysine. His221 contributes to the substrate binding site. The Ni(2+) site is built by His248 and His274. The active-site Proton donor is the His322. Asp362 contacts Ni(2+).

Belongs to the metallo-dependent hydrolases superfamily. Urease alpha subunit family. In terms of assembly, heterotrimer of UreA (gamma), UreB (beta) and UreC (alpha) subunits. Three heterotrimers associate to form the active enzyme. It depends on Ni cation as a cofactor. Carboxylation allows a single lysine to coordinate two nickel ions.

It is found in the cytoplasm. The catalysed reaction is urea + 2 H2O + H(+) = hydrogencarbonate + 2 NH4(+). It functions in the pathway nitrogen metabolism; urea degradation; CO(2) and NH(3) from urea (urease route): step 1/1. In Paracoccus denitrificans (strain Pd 1222), this protein is Urease subunit alpha.